We begin with the raw amino-acid sequence, 152 residues long: MIYYVIALFVIAIDQISKWLIVKNMELGTSIPIIDNVLYITSHRNRGAAWGILENKMWFFYIITVVFVVFIVFYMKKYAKTDKLLGISLGLILGGAIGNFIDRVFRQEVVDFIHVYIFSYNYPVFNIADSALCIGVVLIIIQTLLEGKKTKE.

Helical transmembrane passes span 55–75 and 85–105; these read NKMW…VFYM and LGIS…DRVF. Active-site residues include aspartate 111 and aspartate 129. The helical transmembrane segment at 124–144 threads the bilayer; that stretch reads VFNIADSALCIGVVLIIIQTL.

It belongs to the peptidase A8 family.

Its subcellular location is the cell membrane. The enzyme catalyses Release of signal peptides from bacterial membrane prolipoproteins. Hydrolyzes -Xaa-Yaa-Zaa-|-(S,diacylglyceryl)Cys-, in which Xaa is hydrophobic (preferably Leu), and Yaa (Ala or Ser) and Zaa (Gly or Ala) have small, neutral side chains.. It functions in the pathway protein modification; lipoprotein biosynthesis (signal peptide cleavage). Functionally, this protein specifically catalyzes the removal of signal peptides from prolipoproteins. In Bacillus cereus (strain ZK / E33L), this protein is Lipoprotein signal peptidase.